The sequence spans 636 residues: Rik1-associated factor 2 (636 aa).

Component of the Clr4 methyltransferase complex (ClrC) composed of at least clr4, rik1, pcu4, rbx1, raf1 and raf2. The cullin pcu4, rik1, raf1, raf2 and the ring-box protein rbx1 are components of an E3 ubiquitin ligase, whose activity is essential for heterochromatin assembly. Interacts with pcu4.

It is found in the cytoplasm. Its subcellular location is the mitochondrion. It localises to the nucleus. The protein localises to the chromosome. Functionally, component of the Clr4 methyltransferase complex (ClrC) which contributes to the establishment of heterochromatin by specifically methylating histone H3 to form H3K9me. ClrC preferentially ubiquitylates H3K14 and ClrC-mediated H3 ubiquitination promotes clr4 methyltransferase activity for the methylation of H3K9. H3K9me represents a specific tag for epigenetic transcriptional repression by recruiting swi6/HP1 to methylated histones which leads to transcriptional silencing within centromeric heterochromatin, telomeric regions and at the silent mating-type loci. Has a role in both mitotic and meiotic chromosome segregation. In Schizosaccharomyces pombe (strain 972 / ATCC 24843) (Fission yeast), this protein is Rik1-associated factor 2 (raf2).